Reading from the N-terminus, the 266-residue chain is Nus factor SuhB (266 aa).

Residue 86 to 89 (LDGI) coordinates substrate.

It belongs to the inositol monophosphatase superfamily. Homodimer. The rRNA transcription and antitermination complex (rrnTAC) consists of RNA polymerase (RNAP), NusA, NusB, NusE (rpsJ), NusG, SubB, ribosomal protein S4, DNA and precursor rRNA; S4 is more flexible than other subunits. The cofactor is Mg(2+).

It is found in the cytoplasm. The catalysed reaction is a myo-inositol phosphate + H2O = myo-inositol + phosphate. Part of the processive rRNA transcription and antitermination complex (rrnTAC). The complex forms an RNA-chaperone ring around the RNA exit tunnel of RNA polymerase (RNAP). It supports rapid transcription and antitermination of rRNA operons, cotranscriptional rRNA folding, and annealing of distal rRNA regions to allow correct ribosome biogenesis. This subunit may play a central role in organizing the structure. This Buchnera aphidicola subsp. Baizongia pistaciae (strain Bp) protein is Nus factor SuhB (suhB).